We begin with the raw amino-acid sequence, 352 residues long: Transcription factor BHLH156 (352 aa).

The disordered stretch occupies residues 59-141 (GGDDDDNGGV…RSKTIVSERK (83 aa)). Residues 130–143 (RDRSKTIVSERKRR) are basic motif. Residues 130–179 (RDRSKTIVSERKRRVRMKEKLYELRALVPNITKMDKASIIADAVVYVKDL) enclose the bHLH domain. Positions 144-179 (VRMKEKLYELRALVPNITKMDKASIIADAVVYVKDL) are helix-loop-helix motif. The tract at residues 194–216 (EEARPIRPPPPSAAAQRPQRQPR) is disordered. Residues 206 to 216 (AAAQRPQRQPR) show a composition bias toward low complexity.

Belongs to the bHLH protein family. In terms of assembly, forms homodimers. Interacts with IRO2 in the nucleus. Expressed in the meristematic zone of lateral and primary roots.

It localises to the nucleus. In terms of biological role, transcription factor involved in positive regulation of genes involved in strategy II iron acquisition, including genes for mugineic acid (MA) family phytosiderophores biosynthesis, and genes involved in S-adenosylmethionine cycle and iron transport. May play a role in the regulation of iron deficiency response by promoting the nuclear localization of IRO2. Possesses transactivation activity in yeast. This chain is Transcription factor BHLH156, found in Oryza sativa subsp. japonica (Rice).